A 135-amino-acid chain; its full sequence is S-protein homolog 7 (135 aa).

Residues 1–20 (MNNLFVLVIIIVLSAGSNNG) form the signal peptide.

It belongs to the plant self-incompatibility (S1) protein family.

The protein resides in the secreted. This chain is S-protein homolog 7, found in Arabidopsis thaliana (Mouse-ear cress).